The primary structure comprises 297 residues: uncharacterized protein (297 aa).

The active site involves Glu46.

The protein belongs to the PhzF family. In terms of assembly, homodimer and homotetramer.

This is an uncharacterized protein from Salmonella typhimurium (strain LT2 / SGSC1412 / ATCC 700720).